The chain runs to 208 residues: Probable GTP-binding protein EngB (208 aa).

The 183-residue stretch at 23 to 205 (LTSEMVILGR…RQTLLKYLLT (183 aa)) folds into the EngB-type G domain. GTP contacts are provided by residues 31 to 38 (GRSNVGKS), 57 to 61 (GKTRL), 84 to 87 (DLPG), 154 to 157 (TKFD), and 182 to 184 (FNA). Ser38 and Thr59 together coordinate Mg(2+).

This sequence belongs to the TRAFAC class TrmE-Era-EngA-EngB-Septin-like GTPase superfamily. EngB GTPase family. The cofactor is Mg(2+).

Its function is as follows. Necessary for normal cell division and for the maintenance of normal septation. The polypeptide is Probable GTP-binding protein EngB (Helicobacter pylori (strain P12)).